The chain runs to 1033 residues: SIT4-associating protein SAP190 (1033 aa).

Disordered stretches follow at residues 32-82 (DQDD…TTES), 147-213 (PEII…QVET), 768-813 (FGND…HDSG), and 828-1033 (ENEE…KEAF). Residues 158 to 170 (ILIERDRKDKKED) show a composition bias toward basic and acidic residues. Positions 171–182 (AEEGGDSEETTN) are enriched in acidic residues. The span at 183-195 (DSDHDSGDERSVD) shows a compositional bias: basic and acidic residues. Phosphoserine is present on Ser-774. 2 stretches are compositionally biased toward acidic residues: residues 784 to 793 (SEDIIGDTEG) and 828 to 838 (ENEEDYAEYSD). Ser-857, Ser-862, and Ser-892 each carry phosphoserine. Residues 858–879 (DDGKSKSAESEFTDKISEHRDG) are compositionally biased toward basic and acidic residues. The segment covering 909–924 (SRSQPSDPKLQDQNIF) has biased composition (polar residues). Acidic residues predominate over residues 932–944 (GVGDDDDYMDPND). Position 990 is a phosphothreonine (Thr-990). At Ser-991 the chain carries Phosphoserine. Acidic residues predominate over residues 1000–1018 (ISSDEEDSEDEDEENDMGN).

It belongs to the SAPS family. In terms of assembly, associates with the SIT4 protein phosphatase catalytic subunit in a cell-cycle-dependent manner. Post-translationally, hyperphosphorylated in the absence of SIT4.

It is found in the cytoplasm. In terms of biological role, positive regulator of protein phosphatase SIT4. Involved in the general amino acid control (GAAC) response regulated by TOR. Involved in the dephosphorylation of the elongator complex subunit IKI3. This chain is SIT4-associating protein SAP190 (SAP190), found in Saccharomyces cerevisiae (strain Lalvin EC1118 / Prise de mousse) (Baker's yeast).